We begin with the raw amino-acid sequence, 275 residues long: Formamidopyrimidine-DNA glycosylase (275 aa).

Catalysis depends on Pro2, which acts as the Schiff-base intermediate with DNA. The active-site Proton donor is Glu3. Lys58 functions as the Proton donor; for beta-elimination activity in the catalytic mechanism. Residues His89, Arg108, and Lys151 each contribute to the DNA site. An FPG-type; degenerate zinc finger spans residues 236-275; the sequence is KVYDRAGQPCERCPGPAACAGISRTVQSGRATYFCARTQK. Catalysis depends on Arg265, which acts as the Proton donor; for delta-elimination activity.

Belongs to the FPG family. As to quaternary structure, monomer. The cofactor is Zn(2+).

The enzyme catalyses Hydrolysis of DNA containing ring-opened 7-methylguanine residues, releasing 2,6-diamino-4-hydroxy-5-(N-methyl)formamidopyrimidine.. It carries out the reaction 2'-deoxyribonucleotide-(2'-deoxyribose 5'-phosphate)-2'-deoxyribonucleotide-DNA = a 3'-end 2'-deoxyribonucleotide-(2,3-dehydro-2,3-deoxyribose 5'-phosphate)-DNA + a 5'-end 5'-phospho-2'-deoxyribonucleoside-DNA + H(+). Involved in base excision repair of DNA damaged by oxidation or by mutagenic agents. Acts as a DNA glycosylase that recognizes and removes damaged bases. Has a preference for oxidized purines, such as 7,8-dihydro-8-oxoguanine (8-oxoG). Has AP (apurinic/apyrimidinic) lyase activity and introduces nicks in the DNA strand. Cleaves the DNA backbone by beta-delta elimination to generate a single-strand break at the site of the removed base with both 3'- and 5'-phosphates. The sequence is that of Formamidopyrimidine-DNA glycosylase from Acidiphilium cryptum (strain JF-5).